A 904-amino-acid chain; its full sequence is DNA polymerase I (904 aa).

Residues 186 to 279 enclose the 5'-3' exonuclease domain; the sequence is TPRQYPDFAA…DTLRLQPWDR (94 aa). The 177-residue stretch at 317–493 folds into the 3'-5' exonuclease domain; sequence RGGALAPGTV…LADALDAELA (177 aa).

It belongs to the DNA polymerase type-A family. In terms of assembly, single-chain monomer with multiple functions.

The catalysed reaction is DNA(n) + a 2'-deoxyribonucleoside 5'-triphosphate = DNA(n+1) + diphosphate. In addition to polymerase activity, this DNA polymerase exhibits 3'-5' and 5'-3' exonuclease activity. The protein is DNA polymerase I (polA) of Mycobacterium bovis (strain ATCC BAA-935 / AF2122/97).